Reading from the N-terminus, the 65-residue chain is Toxin Cbi1 (65 aa).

Residues 1-64 (KDGYPMDNKG…VWDRATNKCR (64 aa)) enclose the LCN-type CS-alpha/beta domain. 4 cysteine pairs are disulfide-bonded: Cys-11–Cys-63, Cys-15–Cys-37, Cys-22–Cys-44, and Cys-26–Cys-46.

Belongs to the long (4 C-C) scorpion toxin superfamily. Sodium channel inhibitor family. Beta subfamily. As to expression, expressed by the venom gland.

It is found in the secreted. Beta toxins bind voltage-independently at site-4 of sodium channels (Nav) and shift the voltage of activation toward more negative potentials thereby affecting sodium channel activation and promoting spontaneous and repetitive firing. The chain is Toxin Cbi1 from Centruroides bicolor (Scorpion).